Here is a 196-residue protein sequence, read N- to C-terminus: Small ribosomal subunit protein uS4C (196 aa).

Residues 87–149 (CRLDNVVYRI…HRQNEMFSNN (63 aa)) enclose the S4 RNA-binding domain.

Belongs to the universal ribosomal protein uS4 family. As to quaternary structure, part of the 30S ribosomal subunit. Contacts protein S5. The interaction surface between S4 and S5 is involved in control of translational fidelity.

Its function is as follows. One of the primary rRNA binding proteins, it binds directly to 16S rRNA where it nucleates assembly of the body of the 30S subunit. Functionally, with S5 and S12 plays an important role in translational accuracy. The polypeptide is Small ribosomal subunit protein uS4C (rpsD3) (Clostridium acetobutylicum (strain ATCC 824 / DSM 792 / JCM 1419 / IAM 19013 / LMG 5710 / NBRC 13948 / NRRL B-527 / VKM B-1787 / 2291 / W)).